The sequence spans 369 residues: S-(hydroxymethyl)glutathione dehydrogenase (369 aa).

Positions 40, 62, 92, 95, 98, 106, and 169 each coordinate Zn(2+).

Belongs to the zinc-containing alcohol dehydrogenase family. Class-III subfamily. As to quaternary structure, homodimer. Zn(2+) serves as cofactor.

The protein resides in the cytoplasm. It catalyses the reaction S-(hydroxymethyl)glutathione + NADP(+) = S-formylglutathione + NADPH + H(+). The enzyme catalyses S-(hydroxymethyl)glutathione + NAD(+) = S-formylglutathione + NADH + H(+). It carries out the reaction a primary alcohol + NAD(+) = an aldehyde + NADH + H(+). The catalysed reaction is a secondary alcohol + NAD(+) = a ketone + NADH + H(+). It catalyses the reaction S-nitrosoglutathione + NADH + H(+) = S-(hydroxysulfenamide)glutathione + NAD(+). Its function is as follows. Has high formaldehyde dehydrogenase activity in the presence of glutathione and catalyzes the oxidation of normal alcohols in a reaction that is not GSH-dependent. In addition, hemithiolacetals other than those formed from GSH, including omega-thiol fatty acids, also are substrates. Also acts as a S-nitroso-glutathione reductase by catalyzing the NADH-dependent reduction of S-nitrosoglutathione. This Escherichia coli O1:K1 / APEC protein is S-(hydroxymethyl)glutathione dehydrogenase (frmA).